The following is a 504-amino-acid chain: Glycerol kinase (504 aa).

Residue Thr-14 coordinates ADP. Thr-14, Thr-15, and Ser-16 together coordinate ATP. Thr-14 is a sn-glycerol 3-phosphate binding site. Arg-18 serves as a coordination point for ADP. Arg-84, Glu-85, Tyr-136, and Asp-246 together coordinate sn-glycerol 3-phosphate. Residues Arg-84, Glu-85, Tyr-136, Asp-246, and Gln-247 each contribute to the glycerol site. 2 residues coordinate ADP: Thr-268 and Gly-311. ATP is bound by residues Thr-268, Gly-311, Gln-315, and Gly-412. ADP contacts are provided by Gly-412 and Asn-416.

The protein belongs to the FGGY kinase family.

It catalyses the reaction glycerol + ATP = sn-glycerol 3-phosphate + ADP + H(+). It participates in polyol metabolism; glycerol degradation via glycerol kinase pathway; sn-glycerol 3-phosphate from glycerol: step 1/1. Its activity is regulated as follows. Inhibited by fructose 1,6-bisphosphate (FBP). Key enzyme in the regulation of glycerol uptake and metabolism. Catalyzes the phosphorylation of glycerol to yield sn-glycerol 3-phosphate. The chain is Glycerol kinase from Aliivibrio fischeri (strain ATCC 700601 / ES114) (Vibrio fischeri).